Here is a 356-residue protein sequence, read N- to C-terminus: Replication factor C subunit 3 (356 aa).

N6-acetyllysine is present on lysine 20. Serine 125 bears the Phosphoserine mark.

The protein belongs to the activator 1 small subunits family. Subunit of the RFC complex, an heteropentameric complex consisting of a large subunit RFC1 and four small subunits RFC2, RFC3, RFC4 and RFC5; the RFC complex interacts with PCNA. Forms an heterotetrameric complex with RFC2, RFC4 and RFC5; this complex has ATPase activity but is not stimulated by PCNA. The heterotetramer of subunits RFC2, RFC3, RFC4 and RFC5 interacts with RAD17. Interacts with CNTD1; this interaction facilitates crossover formation.

It localises to the nucleus. In terms of biological role, subunit of the replication factor C (RFC) complex which acts during elongation of primed DNA templates by DNA polymerases delta and epsilon, and is necessary for ATP-dependent loading of proliferating cell nuclear antigen (PCNA) onto primed DNA. The polypeptide is Replication factor C subunit 3 (RFC3) (Bos taurus (Bovine)).